Reading from the N-terminus, the 307-residue chain is Membrane protein insertase YidC 2 (307 aa).

The N-terminal stretch at 1 to 23 is a signal peptide; it reads MKLTLNRILFSGLALSILFTLTG. Residue C24 is the site of N-palmitoyl cysteine attachment. C24 carries the S-diacylglycerol cysteine lipid modification. 5 helical membrane-spanning segments follow: residues 58–78, 135–155, 179–199, 209–225, and 231–251; these read LGYGLAIIIVTIIVRTLILPL, LGGIGCLPLLIQMPFFSAMYF, VLTAIIAALYFFQSWLSMMAV, TMMYTMPIMMIFMSFSL, and LYWLVGGFFSIIQQLITTYLL. The interval 263-307 is disordered; the sequence is YAKNPPKAYQSTSSRKDVTPSQNMEQANLPKKIKSNRNAGKQRKR. Over residues 271–288 the composition is skewed to polar residues; the sequence is YQSTSSRKDVTPSQNMEQ. Positions 293–307 are enriched in basic residues; the sequence is KKIKSNRNAGKQRKR.

This sequence belongs to the OXA1/ALB3/YidC family. Type 2 subfamily.

It localises to the cell membrane. In terms of biological role, required for the insertion and/or proper folding and/or complex formation of integral membrane proteins into the membrane. Involved in integration of membrane proteins that insert both dependently and independently of the Sec translocase complex, as well as at least some lipoproteins. The sequence is that of Membrane protein insertase YidC 2 from Streptococcus pyogenes serotype M3 (strain ATCC BAA-595 / MGAS315).